The following is a 649-amino-acid chain: DNA topoisomerase 3 (649 aa).

Residues 1-134 enclose the Toprim domain; that stretch reads MRLFIAEKPS…KRQQVRRCLI (134 aa). Mg(2+) contacts are provided by Glu7, Asp103, and Asp105. The region spanning 155–603 is the Topo IA-type catalytic domain; that stretch reads FVPLCVSALA…PLVGTLYQLI (449 aa). An interaction with DNA region spans residues 194–199; the sequence is SVGRVQ. Tyr328 (O-(5'-phospho-DNA)-tyrosine intermediate) is an active-site residue. Residues 614–649 form a disordered region; that stretch reads FRGIVAPGGGDKKKSAPRKRAGKKSPPAAETGRQTE.

The protein belongs to the type IA topoisomerase family. It depends on Mg(2+) as a cofactor.

The enzyme catalyses ATP-independent breakage of single-stranded DNA, followed by passage and rejoining.. Functionally, releases the supercoiling and torsional tension of DNA, which is introduced during the DNA replication and transcription, by transiently cleaving and rejoining one strand of the DNA duplex. Introduces a single-strand break via transesterification at a target site in duplex DNA. The scissile phosphodiester is attacked by the catalytic tyrosine of the enzyme, resulting in the formation of a DNA-(5'-phosphotyrosyl)-enzyme intermediate and the expulsion of a 3'-OH DNA strand. The free DNA strand then undergoes passage around the unbroken strand, thus removing DNA supercoils. Finally, in the religation step, the DNA 3'-OH attacks the covalent intermediate to expel the active-site tyrosine and restore the DNA phosphodiester backbone. The sequence is that of DNA topoisomerase 3 from Salmonella typhimurium (strain LT2 / SGSC1412 / ATCC 700720).